A 970-amino-acid chain; its full sequence is Probable histidine kinase 6 (970 aa).

Residues 1-12 (MGKPEARSGWRN) lie on the Cytoplasmic side of the membrane. Residues 13 to 33 (AAAAAWVLVAVACAAYMHWHL) form a helical membrane-spanning segment. Topologically, residues 34 to 306 (RRETMDRAEE…YRQKPPLPWS (273 aa)) are extracellular. One can recognise a CHASE domain in the interval 82–294 (FPSAIDQDTF…GDPFRAHEMR (213 aa)). Residues 307–327 (AITNPLGTFVIWMLVGYIICA) form a helical membrane-spanning segment. The Cytoplasmic segment spans residues 328 to 970 (AWSRYDKVSE…LVVGTKESAV (643 aa)). Positions 362 to 651 (TVSHEIRTPM…TFTFSAVLKR (290 aa)) constitute a Histidine kinase domain. Phosphohistidine; by autocatalysis is present on H365. Response regulatory domains are found at residues 676 to 802 (KAIL…QQLL) and 827 to 962 (NILI…SRLV). 4-aspartylphosphate is present on D877.

Activation probably requires a transfer of a phosphate group between a His in the transmitter domain and an Asp of the receiver domain. Highly expressed in spikelets and at lower levels in roots, young leaves, mature leaves and stems.

The protein localises to the cell membrane. It carries out the reaction ATP + protein L-histidine = ADP + protein N-phospho-L-histidine.. Cytokinin receptor related to bacterial two-component regulators. Functions as a histidine kinase and transmits the stress signal to a downstream MAPK cascade. This Oryza sativa subsp. japonica (Rice) protein is Probable histidine kinase 6.